The following is a 630-amino-acid chain: UvrABC system protein C (630 aa).

The GIY-YIG domain occupies 18–97; that stretch reads TQSGVYLMKN…IKKHRPKYNI (80 aa). The UVR domain occupies 207-242; sequence KKVIKSMTEKMMGAADEEKFEVAARLRDSIEAIKAI.

It belongs to the UvrC family. In terms of assembly, interacts with UvrB in an incision complex.

It is found in the cytoplasm. The UvrABC repair system catalyzes the recognition and processing of DNA lesions. UvrC both incises the 5' and 3' sides of the lesion. The N-terminal half is responsible for the 3' incision and the C-terminal half is responsible for the 5' incision. This chain is UvrABC system protein C, found in Bdellovibrio bacteriovorus (strain ATCC 15356 / DSM 50701 / NCIMB 9529 / HD100).